A 303-amino-acid polypeptide reads, in one-letter code: Protoheme IX farnesyltransferase 2 (303 aa).

The next 9 membrane-spanning stretches (helical) occupy residues 29-49, 51-71, 96-118, 123-143, 150-170, 177-197, 223-243, 244-264, and 281-301; these read VVALMLLTVLVGMCLSVPGIV, LQPLVAGMAGIAMMAGSAAAF, ISTTKAVTFAVSLGSLGFVVLYT, LTAWLTFASLIGYALVYTAYL, NIVIGGLAGAMPPLLGWTAIT, ALLLVIIIFTWTPPHFWALAI, CILLYTILLAIACLLPVLVGM, CGPIYLVGSTVLSCGFIYKAW, and FSIYHLMVLFIVLLVDHYFWV.

Belongs to the UbiA prenyltransferase family. Protoheme IX farnesyltransferase subfamily.

It is found in the cell inner membrane. It carries out the reaction heme b + (2E,6E)-farnesyl diphosphate + H2O = Fe(II)-heme o + diphosphate. Its pathway is porphyrin-containing compound metabolism; heme O biosynthesis; heme O from protoheme: step 1/1. Functionally, converts heme B (protoheme IX) to heme O by substitution of the vinyl group on carbon 2 of heme B porphyrin ring with a hydroxyethyl farnesyl side group. The chain is Protoheme IX farnesyltransferase 2 from Shewanella frigidimarina (strain NCIMB 400).